Consider the following 756-residue polypeptide: Multicystatin (756 aa).

Cystatin domains follow at residues 3–96 (IVGG…DDST), 97–191 (MPGG…DDIA), 192–285 (KLGG…DDSA), 286–380 (KTGG…DSAK), 381–474 (KLGG…DDSA), 475–568 (KLGG…DDSA), 569–662 (IIGG…DDSA), and 663–756 (KPGG…DATK). 8 short sequence motifs (secondary area of contact) span residues 48-52 (QIVAG), 142-146 (QVVAG), 237-241 (QVVAG), 331-335 (QLVSG), 426-430 (QVVAG), 520-524 (QLVAG), 614-618 (QLVAG), and 708-712 (QVVAG).

This sequence belongs to the cystatin family. Phytocystatin subfamily. In terms of tissue distribution, expressed abundantly in tuber and leaf.

In terms of biological role, probably has a role in the plant's defense system. In Solanum tuberosum (Potato), this protein is Multicystatin.